The sequence spans 383 residues: Phospho-N-acetylmuramoyl-pentapeptide-transferase (383 aa).

A run of 9 helical transmembrane segments spans residues 26-46 (TAGA…GVIE), 73-93 (TMGG…WAEL), 98-118 (IILL…DDFL), 131-151 (IYKI…LYYF), 182-202 (IFLP…IPFA), 221-241 (GLAI…SYVS), 258-278 (AGEV…FLWF), 283-305 (AQVF…IALF), and 360-380 (QVVF…IATL).

The protein belongs to the glycosyltransferase 4 family. MraY subfamily. Mg(2+) is required as a cofactor.

The protein resides in the cell inner membrane. The catalysed reaction is UDP-N-acetyl-alpha-D-muramoyl-L-alanyl-gamma-D-glutamyl-meso-2,6-diaminopimeloyl-D-alanyl-D-alanine + di-trans,octa-cis-undecaprenyl phosphate = di-trans,octa-cis-undecaprenyl diphospho-N-acetyl-alpha-D-muramoyl-L-alanyl-D-glutamyl-meso-2,6-diaminopimeloyl-D-alanyl-D-alanine + UMP. Its pathway is cell wall biogenesis; peptidoglycan biosynthesis. Its function is as follows. Catalyzes the initial step of the lipid cycle reactions in the biosynthesis of the cell wall peptidoglycan: transfers peptidoglycan precursor phospho-MurNAc-pentapeptide from UDP-MurNAc-pentapeptide onto the lipid carrier undecaprenyl phosphate, yielding undecaprenyl-pyrophosphoryl-MurNAc-pentapeptide, known as lipid I. In Brachyspira hyodysenteriae (strain ATCC 49526 / WA1), this protein is Phospho-N-acetylmuramoyl-pentapeptide-transferase.